Here is a 227-residue protein sequence, read N- to C-terminus: H-2 class II histocompatibility antigen, A-U alpha chain (227 aa).

Positions 1 to 82 (DHVGSYGIVV…KRSNSTPATN (82 aa)) are alpha-1. The Extracellular portion of the chain corresponds to 1-189 (DHVGSYGIVV…IPAPMSELTE (189 aa)). Residues 83 to 176 (EAPQATVFPK…GLEEPVLKHW (94 aa)) form an alpha-2 region. One can recognise an Ig-like C1-type domain in the interval 85–177 (PQATVFPKSP…LEEPVLKHWE (93 aa)). Cysteines 105 and 161 form a disulfide. N116 carries N-linked (GlcNAc...) asparagine glycosylation. A connecting peptide region spans residues 177-189 (EPEIPAPMSELTE). A helical membrane pass occupies residues 190–215 (TVVCALGLSVGLVGIVVGTIFIIQGL). Over 216–227 (RSGGTSRHPGPL) the chain is Cytoplasmic.

This sequence belongs to the MHC class II family.

It is found in the membrane. The polypeptide is H-2 class II histocompatibility antigen, A-U alpha chain (H2-Aa) (Mus musculus (Mouse)).